The primary structure comprises 500 residues: Signal transduction histidine-protein kinase/phosphatase UhpB (500 aa).

8 helical membrane passes run leucine 8–isoleucine 28, valine 78–alanine 98, leucine 112–glycine 132, alanine 140–histidine 160, histidine 185–alanine 205, leucine 207–tryptophan 224, alanine 231–histidine 249, and valine 253–isoleucine 273. At glutamine 274–valine 500 the chain is on the cytoplasmic side. The Histidine kinase domain occupies glutamate 311–tyrosine 499. Histidine 313 carries the post-translational modification Phosphohistidine; by autocatalysis.

Post-translationally, autophosphorylated.

The protein resides in the cell inner membrane. It catalyses the reaction ATP + protein L-histidine = ADP + protein N-phospho-L-histidine.. Part of the UhpABC signaling cascade that controls the expression of the hexose phosphate transporter UhpT. UhpB functions as a membrane-associated protein kinase that autophosphorylates in response to interaction with UhpC, and subsequently transfers its phosphate group to the response regulator UhpA. Can also dephosphorylate UhpA. The sequence is that of Signal transduction histidine-protein kinase/phosphatase UhpB (uhpB) from Salmonella typhimurium (strain LT2 / SGSC1412 / ATCC 700720).